A 330-amino-acid polypeptide reads, in one-letter code: Glycerol-3-phosphate dehydrogenase [NAD(P)+] (330 aa).

3 residues coordinate NADPH: tryptophan 13, arginine 33, and lysine 103. Residues lysine 103, glycine 131, and threonine 133 each contribute to the sn-glycerol 3-phosphate site. Alanine 135 contributes to the NADPH binding site. Residues lysine 186, aspartate 239, serine 249, arginine 250, and asparagine 251 each coordinate sn-glycerol 3-phosphate. Catalysis depends on lysine 186, which acts as the Proton acceptor. Arginine 250 serves as a coordination point for NADPH. 2 residues coordinate NADPH: valine 274 and glutamate 276.

The protein belongs to the NAD-dependent glycerol-3-phosphate dehydrogenase family.

It is found in the cytoplasm. It carries out the reaction sn-glycerol 3-phosphate + NAD(+) = dihydroxyacetone phosphate + NADH + H(+). It catalyses the reaction sn-glycerol 3-phosphate + NADP(+) = dihydroxyacetone phosphate + NADPH + H(+). Its pathway is membrane lipid metabolism; glycerophospholipid metabolism. Catalyzes the reduction of the glycolytic intermediate dihydroxyacetone phosphate (DHAP) to sn-glycerol 3-phosphate (G3P), the key precursor for phospholipid synthesis. This Erythrobacter litoralis (strain HTCC2594) protein is Glycerol-3-phosphate dehydrogenase [NAD(P)+].